A 378-amino-acid polypeptide reads, in one-letter code: uncharacterized protein (378 aa).

Residues 150–176 are compositionally biased toward low complexity; that stretch reads TTTATTSNNRFNNNNSNNNNINNNNDN. Residues 150–187 form a disordered region; sequence TTTATTSNNRFNNNNSNNNNINNNNDNNNKEQKKESRC. Basic and acidic residues predominate over residues 177–187; sequence NNKEQKKESRC.

This is an uncharacterized protein from Dictyostelium discoideum (Social amoeba).